The sequence spans 380 residues: Cytochrome b (380 aa).

Transmembrane regions (helical) follow at residues 34–54, 78–99, 114–134, and 179–199; these read FGSL…LLAM, WLIR…YFHI, WNTG…GYVL, and FFAL…IHLT. Heme b is bound by residues His84 and His98. Heme b contacts are provided by His183 and His197. His202 serves as a coordination point for a ubiquinone. 4 consecutive transmembrane segments (helical) span residues 227 to 247, 289 to 309, 321 to 341, and 348 to 368; these read LKDI…ALFS, LGGV…PFLH, LSQL…WVGS, and FIII…VLFP.

Belongs to the cytochrome b family. In terms of assembly, the cytochrome bc1 complex contains 11 subunits: 3 respiratory subunits (MT-CYB, CYC1 and UQCRFS1), 2 core proteins (UQCRC1 and UQCRC2) and 6 low-molecular weight proteins (UQCRH/QCR6, UQCRB/QCR7, UQCRQ/QCR8, UQCR10/QCR9, UQCR11/QCR10 and a cleavage product of UQCRFS1). This cytochrome bc1 complex then forms a dimer. Heme b serves as cofactor.

The protein resides in the mitochondrion inner membrane. Functionally, component of the ubiquinol-cytochrome c reductase complex (complex III or cytochrome b-c1 complex) that is part of the mitochondrial respiratory chain. The b-c1 complex mediates electron transfer from ubiquinol to cytochrome c. Contributes to the generation of a proton gradient across the mitochondrial membrane that is then used for ATP synthesis. This is Cytochrome b (MT-CYB) from Halobaena caerulea (Blue petrel).